Here is a 165-residue protein sequence, read N- to C-terminus: uncharacterized protein (165 aa).

The N-acetyltransferase domain occupies 8-159 (LLVNYKTLEE…QGVQEQTTKP (152 aa)).

This is an uncharacterized protein from Shouchella clausii (strain KSM-K16) (Alkalihalobacillus clausii).